Reading from the N-terminus, the 201-residue chain is Imidazole glycerol phosphate synthase subunit HisH (201 aa).

Residues 1 to 201 (MVFIADYGAG…LQVLRNFAEC (201 aa)) enclose the Glutamine amidotransferase type-1 domain. The active-site Nucleophile is the Cys-79. Catalysis depends on residues His-183 and Glu-185.

Heterodimer of HisH and HisF.

It is found in the cytoplasm. The enzyme catalyses 5-[(5-phospho-1-deoxy-D-ribulos-1-ylimino)methylamino]-1-(5-phospho-beta-D-ribosyl)imidazole-4-carboxamide + L-glutamine = D-erythro-1-(imidazol-4-yl)glycerol 3-phosphate + 5-amino-1-(5-phospho-beta-D-ribosyl)imidazole-4-carboxamide + L-glutamate + H(+). It carries out the reaction L-glutamine + H2O = L-glutamate + NH4(+). Its pathway is amino-acid biosynthesis; L-histidine biosynthesis; L-histidine from 5-phospho-alpha-D-ribose 1-diphosphate: step 5/9. Functionally, IGPS catalyzes the conversion of PRFAR and glutamine to IGP, AICAR and glutamate. The HisH subunit catalyzes the hydrolysis of glutamine to glutamate and ammonia as part of the synthesis of IGP and AICAR. The resulting ammonia molecule is channeled to the active site of HisF. This chain is Imidazole glycerol phosphate synthase subunit HisH, found in Chlorobium luteolum (strain DSM 273 / BCRC 81028 / 2530) (Pelodictyon luteolum).